A 193-amino-acid polypeptide reads, in one-letter code: Imidazoleglycerol-phosphate dehydratase (193 aa).

It belongs to the imidazoleglycerol-phosphate dehydratase family.

The protein resides in the cytoplasm. It carries out the reaction D-erythro-1-(imidazol-4-yl)glycerol 3-phosphate = 3-(imidazol-4-yl)-2-oxopropyl phosphate + H2O. It functions in the pathway amino-acid biosynthesis; L-histidine biosynthesis; L-histidine from 5-phospho-alpha-D-ribose 1-diphosphate: step 6/9. In Saccharolobus islandicus (strain Y.G.57.14 / Yellowstone #1) (Sulfolobus islandicus), this protein is Imidazoleglycerol-phosphate dehydratase.